We begin with the raw amino-acid sequence, 150 residues long: UPF0336 protein SCO4636 (150 aa).

Residues 8 to 116 enclose the MaoC-like domain; it reads VGRSYPPTAP…STIEAIKSMA (109 aa).

Belongs to the UPF0336 family.

The chain is UPF0336 protein SCO4636 from Streptomyces coelicolor (strain ATCC BAA-471 / A3(2) / M145).